The primary structure comprises 85 residues: NAD(P)H-quinone oxidoreductase subunit O (85 aa).

Belongs to the complex I NdhO subunit family. In terms of assembly, NDH-1 can be composed of about 15 different subunits; different subcomplexes with different compositions have been identified which probably have different functions.

Its subcellular location is the cellular thylakoid membrane. The enzyme catalyses a plastoquinone + NADH + (n+1) H(+)(in) = a plastoquinol + NAD(+) + n H(+)(out). It carries out the reaction a plastoquinone + NADPH + (n+1) H(+)(in) = a plastoquinol + NADP(+) + n H(+)(out). NDH-1 shuttles electrons from an unknown electron donor, via FMN and iron-sulfur (Fe-S) centers, to quinones in the respiratory and/or the photosynthetic chain. The immediate electron acceptor for the enzyme in this species is believed to be plastoquinone. Couples the redox reaction to proton translocation, and thus conserves the redox energy in a proton gradient. Cyanobacterial NDH-1 also plays a role in inorganic carbon-concentration. The sequence is that of NAD(P)H-quinone oxidoreductase subunit O from Synechococcus sp. (strain WH7803).